The primary structure comprises 704 residues: G-protein coupled receptor-associated protein LMBRD2B (704 aa).

Over 1–3 (MSG) the chain is Extracellular. The chain crosses the membrane as a helical span at residues 4–21 (AALGIEIVVVFFLALFLL). The Cytoplasmic portion of the chain corresponds to 22 to 33 (HRYGDFKKQQRM). The chain crosses the membrane as a helical span at residues 34 to 54 (VLFGTLLAWYLCFLIVFILPL). The Extracellular portion of the chain corresponds to 55–111 (DVSTTIYNQCLIDQEAQTQTPSVSPVLSEQTTANASISPAKSTQRVCYKPWSYIPDG). N88 carries an N-linked (GlcNAc...) asparagine glycan. The chain crosses the membrane as a helical span at residues 112-132 (IMPVFWRVVYWTSQCLTWLLL). Topologically, residues 133–157 (PFMQSYARSGGFTITGKIKTALIEN) are cytoplasmic. Residues 158 to 178 (AIYYGTYLFIFGSLLIYVAVH) form a helical membrane-spanning segment. Topologically, residues 179-192 (PQWHLSWYELQTIG) are extracellular. A helical transmembrane segment spans residues 193-213 (ITAANTWGLFLLVLLLGYGLV). At 214–393 (DIPRSYWEAS…ECLLKQWFYR (180 aa)) the chain is on the cytoplasmic side. Residues 235–266 (KAAKLMTEKADSEENLEDVMEEVRKINESIKY) are a coiled coil. A helical transmembrane segment spans residues 394 to 414 (VLAVVLALFSVAVVWSECTFF). Residues 415–438 (STHPVLSLFAVFIQLAERDYNYLY) are Extracellular-facing. Residues 439–459 (IEMACFITIFFLCTCVYSTVF) form a helical membrane-spanning segment. The Cytoplasmic segment spans residues 460–481 (RIRVFNYYYLASHHQTDAYSLQ). Residues 482 to 502 (FSGMLFCRLTPPLCLNFLGLI) traverse the membrane as a helical segment. Residues 503-527 (HMDSAISHQAKKQTAYTSIMGSMRV) lie on the Extracellular side of the membrane. The helical transmembrane segment at 528–548 (LSFIANGFYIYYPMLIVVLCI) threads the bilayer. The Cytoplasmic segment spans residues 549–704 (ATYFSLGTRC…SSRNRIFDDV (156 aa)). Residues 576–612 (DLIDEGRELLRRERRKRQRIEDGENRRREWRERYAQR) are a coiled coil. Disordered stretches follow at residues 613–654 (DENA…QSGR) and 672–704 (TLTDDPLQSDTGRHAGGRYLSMSSSRNRIFDDV). Residues 631-654 (YGETLNANTNRQAKYTRSGSQSGR) are compositionally biased toward polar residues.

It belongs to the LIMR family.

Its subcellular location is the cell membrane. May associate with G-protein coupled receptors and regulate downstream signaling pathways. This chain is G-protein coupled receptor-associated protein LMBRD2B (lmbrd2b), found in Danio rerio (Zebrafish).